Consider the following 480-residue polypeptide: Proline--tRNA ligase (480 aa).

The protein belongs to the class-II aminoacyl-tRNA synthetase family. ProS type 3 subfamily. Homodimer.

It localises to the cytoplasm. The enzyme catalyses tRNA(Pro) + L-proline + ATP = L-prolyl-tRNA(Pro) + AMP + diphosphate. In terms of biological role, catalyzes the attachment of proline to tRNA(Pro) in a two-step reaction: proline is first activated by ATP to form Pro-AMP and then transferred to the acceptor end of tRNA(Pro). This is Proline--tRNA ligase from Roseiflexus castenholzii (strain DSM 13941 / HLO8).